The following is a 222-amino-acid chain: Uridine kinase (222 aa).

13 to 20 (GGSGAGKT) is a binding site for ATP.

It belongs to the uridine kinase family.

It is found in the cytoplasm. It catalyses the reaction uridine + ATP = UMP + ADP + H(+). It carries out the reaction cytidine + ATP = CMP + ADP + H(+). It functions in the pathway pyrimidine metabolism; CTP biosynthesis via salvage pathway; CTP from cytidine: step 1/3. The protein operates within pyrimidine metabolism; UMP biosynthesis via salvage pathway; UMP from uridine: step 1/1. This is Uridine kinase from Chlamydia pneumoniae (Chlamydophila pneumoniae).